Here is a 406-residue protein sequence, read N- to C-terminus: 4-hydroxy-3-methylbut-2-enyl diphosphate reductase (406 aa).

A [4Fe-4S] cluster-binding site is contributed by Cys-66. Residue His-96 participates in (2E)-4-hydroxy-3-methylbut-2-enyl diphosphate binding. His-96 contributes to the dimethylallyl diphosphate binding site. His-96 provides a ligand contact to isopentenyl diphosphate. [4Fe-4S] cluster is bound at residue Cys-157. His-185 contacts (2E)-4-hydroxy-3-methylbut-2-enyl diphosphate. Residue His-185 coordinates dimethylallyl diphosphate. Isopentenyl diphosphate is bound at residue His-185. Residue Glu-187 is the Proton donor of the active site. Residue Thr-250 coordinates (2E)-4-hydroxy-3-methylbut-2-enyl diphosphate. A [4Fe-4S] cluster-binding site is contributed by Cys-288. Ser-317, Ser-318, Asn-319, and Ser-379 together coordinate (2E)-4-hydroxy-3-methylbut-2-enyl diphosphate. Dimethylallyl diphosphate is bound by residues Ser-317, Ser-318, Asn-319, and Ser-379. 4 residues coordinate isopentenyl diphosphate: Ser-317, Ser-318, Asn-319, and Ser-379.

It belongs to the IspH family. Requires [4Fe-4S] cluster as cofactor.

The catalysed reaction is isopentenyl diphosphate + 2 oxidized [2Fe-2S]-[ferredoxin] + H2O = (2E)-4-hydroxy-3-methylbut-2-enyl diphosphate + 2 reduced [2Fe-2S]-[ferredoxin] + 2 H(+). It catalyses the reaction dimethylallyl diphosphate + 2 oxidized [2Fe-2S]-[ferredoxin] + H2O = (2E)-4-hydroxy-3-methylbut-2-enyl diphosphate + 2 reduced [2Fe-2S]-[ferredoxin] + 2 H(+). It functions in the pathway isoprenoid biosynthesis; dimethylallyl diphosphate biosynthesis; dimethylallyl diphosphate from (2E)-4-hydroxy-3-methylbutenyl diphosphate: step 1/1. It participates in isoprenoid biosynthesis; isopentenyl diphosphate biosynthesis via DXP pathway; isopentenyl diphosphate from 1-deoxy-D-xylulose 5-phosphate: step 6/6. Its function is as follows. Catalyzes the conversion of 1-hydroxy-2-methyl-2-(E)-butenyl 4-diphosphate (HMBPP) into a mixture of isopentenyl diphosphate (IPP) and dimethylallyl diphosphate (DMAPP). Acts in the terminal step of the DOXP/MEP pathway for isoprenoid precursor biosynthesis. The protein is 4-hydroxy-3-methylbut-2-enyl diphosphate reductase of Synechococcus sp. (strain RCC307).